A 221-amino-acid chain; its full sequence is Probable septum site-determining protein MinC (221 aa).

It belongs to the MinC family. Interacts with MinD and FtsZ.

Cell division inhibitor that blocks the formation of polar Z ring septums. Rapidly oscillates between the poles of the cell to destabilize FtsZ filaments that have formed before they mature into polar Z rings. Prevents FtsZ polymerization. The protein is Probable septum site-determining protein MinC of Prochlorococcus marinus (strain SARG / CCMP1375 / SS120).